A 338-amino-acid polypeptide reads, in one-letter code: DNA-directed RNA polymerase subunit alpha (338 aa).

The segment at 1–234 (MIHKNWAELI…DQLSIFVNFE (234 aa)) is alpha N-terminal domain (alpha-NTD). The segment at 250–338 (FNPLLLKKVD…DLAKRFEDQF (89 aa)) is alpha C-terminal domain (alpha-CTD).

This sequence belongs to the RNA polymerase alpha chain family. In terms of assembly, homodimer. The RNAP catalytic core consists of 2 alpha, 1 beta, 1 beta' and 1 omega subunit. When a sigma factor is associated with the core the holoenzyme is formed, which can initiate transcription.

It catalyses the reaction RNA(n) + a ribonucleoside 5'-triphosphate = RNA(n+1) + diphosphate. Functionally, DNA-dependent RNA polymerase catalyzes the transcription of DNA into RNA using the four ribonucleoside triphosphates as substrates. The chain is DNA-directed RNA polymerase subunit alpha from Cereibacter sphaeroides (strain ATCC 17029 / ATH 2.4.9) (Rhodobacter sphaeroides).